Consider the following 161-residue polypeptide: S-ribosylhomocysteine lyase (161 aa).

Residues His-53, His-57, and Cys-124 each contribute to the Fe cation site.

The protein belongs to the LuxS family. As to quaternary structure, homodimer. The cofactor is Fe cation.

The catalysed reaction is S-(5-deoxy-D-ribos-5-yl)-L-homocysteine = (S)-4,5-dihydroxypentane-2,3-dione + L-homocysteine. Its function is as follows. Involved in the synthesis of autoinducer 2 (AI-2) which is secreted by bacteria and is used to communicate both the cell density and the metabolic potential of the environment. The regulation of gene expression in response to changes in cell density is called quorum sensing. Catalyzes the transformation of S-ribosylhomocysteine (RHC) to homocysteine (HC) and 4,5-dihydroxy-2,3-pentadione (DPD). This Phocaeicola vulgatus (strain ATCC 8482 / DSM 1447 / JCM 5826 / CCUG 4940 / NBRC 14291 / NCTC 11154) (Bacteroides vulgatus) protein is S-ribosylhomocysteine lyase.